An 833-amino-acid chain; its full sequence is Leucine--tRNA ligase (833 aa).

Positions 41-52 (PYPSGAGLHVGH) match the 'HIGH' region motif. Positions 610–614 (KMSKS) match the 'KMSKS' region motif. Lysine 613 lines the ATP pocket.

It belongs to the class-I aminoacyl-tRNA synthetase family.

The protein resides in the cytoplasm. The catalysed reaction is tRNA(Leu) + L-leucine + ATP = L-leucyl-tRNA(Leu) + AMP + diphosphate. The protein is Leucine--tRNA ligase of Streptococcus equi subsp. equi (strain 4047).